Consider the following 985-residue polypeptide: Na(+)/H(+) antiporter (985 aa).

The Cytoplasmic segment spans residues 1–12 (MAIWEQLEVSKA). A helical membrane pass occupies residues 13–33 (HVAYACVGVFSSIFSLVSLYV). The Extracellular portion of the chain corresponds to 34–36 (KEK). Residues 37-57 (LYIGESTVAGIFGLIVGPVCL) traverse the membrane as a helical segment. Residues 58–70 (NWFNPLKWGNSDS) lie on the Cytoplasmic side of the membrane. A helical membrane pass occupies residues 71-91 (ITLEITRIVLCLQIFAVAVEL). At 92-105 (PRKYMLKHWVSVTM) the chain is on the extracellular side. A helical transmembrane segment spans residues 106-126 (LLLPVMTAGWLIIGLFVWILI). Over 127–128 (PG) the chain is Cytoplasmic. Residues 129–149 (LNFSASLLISACITATDPILA) form a helical membrane-spanning segment. At 150 to 176 (QSVVSGKFAQRVPGHLRNLLSAESGCN) the chain is on the extracellular side. Residues 177 to 197 (DGMAFPFLFLSMNLILHPGNG) form a helical membrane-spanning segment. Over 198–203 (REIVKD) the chain is Cytoplasmic. Residues 204-224 (WICVTILYECLFGCLLGCFIG) form a helical membrane-spanning segment. Residues 225-244 (YVGRITIRFAEKKNIIDRES) lie on the Extracellular side of the membrane. A helical membrane pass occupies residues 245–265 (FLAFYVVLAFMCAGFGSILGV). The Cytoplasmic segment spans residues 266 to 294 (DDLLVSFAAGATFAWDGWFSQKTQESNVS). Residues 295 to 315 (TVIDLLLNYAYFIYFGAIIPW) form a helical membrane-spanning segment. Residues 316–319 (SQFN) are Extracellular-facing. A helical transmembrane segment spans residues 320-340 (NGEIGTNVWRLIILSIVVIFL). The Cytoplasmic portion of the chain corresponds to 341–361 (RRIPAVMILRPLIPDIKSWRE). A helical membrane pass occupies residues 362–382 (ALFVGHFGPIGVGAIFAAILA). The Extracellular segment spans residues 383-410 (RGELESTFSDEPTPLNVVPSKEESKHWQ). Residues 411–431 (LIACIWPITCFFIVTSIIVHG) form a helical membrane-spanning segment. The Cytoplasmic segment spans residues 432 to 985 (SSVAIITLGR…ALSKTLGLNK (554 aa)). Disordered stretches follow at residues 489–701 (MTLS…KPGT) and 726–760 (DRNE…GGRL). Residues 517–526 (NNDQIGSVAT) are compositionally biased toward polar residues. Residues 538 to 558 (PRRRKLSRKEKRLNRRQKLRN) show a composition bias toward basic residues. Composition is skewed to basic and acidic residues over residues 559–572 (KGRE…KNEM) and 580–593 (DLGR…KEAR). Ser-568 carries the post-translational modification Phosphoserine. The segment covering 637-646 (SFESSERSSS) has biased composition (low complexity). Over residues 661–675 (EETESEIESEDEMEN) the composition is skewed to acidic residues. Residues 676-698 (ESERSMASSEERRIRKMKEEEMK) show a composition bias toward basic and acidic residues. Low complexity predominate over residues 743-756 (SSLTTTMTNLSSSS). Thr-765 is modified (phosphothreonine). 2 positions are modified to phosphoserine: Ser-768 and Ser-774. The interval 812 to 985 (INPHKSDDDK…ALSKTLGLNK (174 aa)) is disordered. Basic and acidic residues-rich tracts occupy residues 815–828 (HKSD…RPRN) and 854–863 (DEEKAIEGPS). A compositionally biased stretch (acidic residues) spans 887 to 920 (LDLEDEPSSEEDLGDSYNMDDSEDYDDNAYESET). Residues 970-979 (SAAVKSALSK) are compositionally biased toward low complexity.

Belongs to the fungal Na(+)/H(+) exchanger family.

Its subcellular location is the cell membrane. Its function is as follows. Sodium export from cell, takes up external protons in exchange for internal sodium ions. Also capable of exporting potassium ions. This chain is Na(+)/H(+) antiporter (NHA1), found in Saccharomyces cerevisiae (strain ATCC 204508 / S288c) (Baker's yeast).